Consider the following 384-residue polypeptide: F-box protein At2g07140 (384 aa).

The 46-residue stretch at 1 to 46 folds into the F-box domain; sequence MTLPELPKDLVEEILSFVPATSLKRLRSTCKGWNRLFKDDKRFTRI.

The protein is F-box protein At2g07140 of Arabidopsis thaliana (Mouse-ear cress).